A 305-amino-acid polypeptide reads, in one-letter code: Methionyl-tRNA formyltransferase (305 aa).

Position 108-111 (serine 108–proline 111) interacts with (6S)-5,6,7,8-tetrahydrofolate.

This sequence belongs to the Fmt family.

It catalyses the reaction L-methionyl-tRNA(fMet) + (6R)-10-formyltetrahydrofolate = N-formyl-L-methionyl-tRNA(fMet) + (6S)-5,6,7,8-tetrahydrofolate + H(+). Attaches a formyl group to the free amino group of methionyl-tRNA(fMet). The formyl group appears to play a dual role in the initiator identity of N-formylmethionyl-tRNA by promoting its recognition by IF2 and preventing the misappropriation of this tRNA by the elongation apparatus. This chain is Methionyl-tRNA formyltransferase, found in Thermus thermophilus (strain ATCC 27634 / DSM 579 / HB8).